The chain runs to 274 residues: Undecaprenyl-diphosphatase (274 aa).

7 helical membrane passes run Ile-4–Ile-24, Leu-46–Tyr-63, Lys-82–Gly-102, Leu-109–Ala-129, Ala-184–Leu-204, Met-218–Leu-238, and Phe-249–Val-269.

The protein belongs to the UppP family.

It is found in the cell inner membrane. The catalysed reaction is di-trans,octa-cis-undecaprenyl diphosphate + H2O = di-trans,octa-cis-undecaprenyl phosphate + phosphate + H(+). Functionally, catalyzes the dephosphorylation of undecaprenyl diphosphate (UPP). Confers resistance to bacitracin. The protein is Undecaprenyl-diphosphatase of Dechloromonas aromatica (strain RCB).